A 499-amino-acid polypeptide reads, in one-letter code: Protein phosphatase PP2A 55 kDa regulatory subunit (499 aa).

The segment at 1-30 (MGRWGRQSPVLEPPDPQMQTTPPPPTLPPR) is disordered. The segment covering 11–28 (LEPPDPQMQTTPPPPTLP) has biased composition (pro residues). WD repeat units follow at residues 79 to 118 (TDAD…KAAN), 144 to 185 (EIEE…KSFG), 228 to 266 (AHTY…QSYN), 277 to 317 (ELTE…LCDR), 336 to 374 (EIIS…KPIE), 391 to 432 (ENDC…DVTL), and 467 to 498 (DFNK…FQDK).

The protein belongs to the phosphatase 2A regulatory subunit B family. PP2A exists in several trimeric forms, all of which consist of a core composed of a catalytic subunit associated with a 65 kDa regulatory subunit (PR65) (subunit A). The core complex associates with a third, variable subunit (subunit B), which confers distinct properties to the holoenzyme.

Functionally, could perform a substrate recognition function or could be responsible for targeting the enzyme complex to the appropriate subcellular compartment. This is Protein phosphatase PP2A 55 kDa regulatory subunit (tws) from Drosophila melanogaster (Fruit fly).